Consider the following 268-residue polypeptide: DNA ligase (268 aa).

The active-site N6-AMP-lysine intermediate is lysine 41. ATP contacts are provided by phenylalanine 111, arginine 181, and lysine 187.

Belongs to the ATP-dependent DNA ligase family. A divalent metal cation serves as cofactor.

It carries out the reaction ATP + (deoxyribonucleotide)n-3'-hydroxyl + 5'-phospho-(deoxyribonucleotide)m = (deoxyribonucleotide)n+m + AMP + diphosphate.. Its function is as follows. Catalyzes efficient strand joining on a single nicked DNA. The protein is DNA ligase (ligA) of Haemophilus influenzae (strain ATCC 51907 / DSM 11121 / KW20 / Rd).